Consider the following 431-residue polypeptide: Tol-Pal system protein TolB (431 aa).

The first 26 residues, 1-26, serve as a signal peptide directing secretion; sequence MRLMTKLGFRALVASCLIAAGGAANA. The interval 411 to 431 is disordered; it reads PQILSVQGGSVREPSWGPFMQ.

It belongs to the TolB family. The Tol-Pal system is composed of five core proteins: the inner membrane proteins TolA, TolQ and TolR, the periplasmic protein TolB and the outer membrane protein Pal. They form a network linking the inner and outer membranes and the peptidoglycan layer.

It is found in the periplasm. Functionally, part of the Tol-Pal system, which plays a role in outer membrane invagination during cell division and is important for maintaining outer membrane integrity. The polypeptide is Tol-Pal system protein TolB (Burkholderia ambifaria (strain MC40-6)).